The following is a 62-amino-acid chain: Kurtoxin-like I (62 aa).

An LCN-type CS-alpha/beta domain is found at 2–62 (IDGYPVDNWN…ARIKRGGRCN (61 aa)). Intrachain disulfides connect Cys-12–Cys-61, Cys-16–Cys-37, Cys-23–Cys-44, and Cys-27–Cys-46.

In terms of tissue distribution, expressed by the venom gland.

It is found in the secreted. Functionally, this neurotoxin acts on sodium and calcium channels. Potently inhibits native voltage-gated T-type calcium channel activity in mouse male germ cells and weakly blocks Cav3.3/CACNA1I channels expressed in Xenopus oocytes. In addition, significantly slows the inactivation of activated recombinant sodium channels (Nav1.5/SCN5A). This Parabuthus granulatus (Granulated thick-tailed scorpion) protein is Kurtoxin-like I.